Consider the following 747-residue polypeptide: DNA repair and recombination protein RAD54-like (747 aa).

A disordered region spans residues Met-1–Thr-41. The interval Arg-2–Gln-9 is required for chromatin remodeling, strand pairing activities and coupling of ATPase activity. Ser-38 is modified (phosphoserine). The 176-residue stretch at Ser-170–Gly-345 folds into the Helicase ATP-binding domain. Residue Asp-183 to Thr-190 coordinates ATP. Positions Asp-296–His-299 match the DEGH box motif. Residues Val-500 to Glu-653 form the Helicase C-terminal domain. At Lys-515 the chain carries N6-acetyllysine. Ser-572 carries the phosphoserine; by NEK1 modification.

This sequence belongs to the SNF2/RAD54 helicase family. As to quaternary structure, homohexamer. Interacts (via N-terminus) with RAD51. Interacts with NAP1L1. Interacts with BRD9; this interaction orchestrates RAD51-RAD54 complex formation. Acetylated. Acetylation promotes interaction with BRD9, and subsequently with RAD54, which is essential for homologous recombination (HR). In terms of processing, phosphorylated. Phosphorylation at Ser-572 by NEK1 specifically in G2 phase allows efficient removal of RAD51 filaments from DNA.

The protein resides in the nucleus. The catalysed reaction is ATP + H2O = ADP + phosphate + H(+). Functionally, plays an essential role in homologous recombination (HR) which is a major pathway for repairing DNA double-strand breaks (DSBs), single-stranded DNA (ssDNA) gaps, and stalled or collapsed replication forks. Acts as a molecular motor during the homology search and guides RAD51 ssDNA along a donor dsDNA thereby changing the homology search from the diffusion-based mechanism to a motor-guided mechanism. Also plays an essential role in RAD51-mediated synaptic complex formation which consists of three strands encased in a protein filament formed once homology is recognized. Once DNA strand exchange occured, dissociates RAD51 from nucleoprotein filaments formed on dsDNA. This Homo sapiens (Human) protein is DNA repair and recombination protein RAD54-like (RAD54L).